A 333-amino-acid polypeptide reads, in one-letter code: 4-hydroxy-3-methylbut-2-enyl diphosphate reductase (333 aa).

Cys-34 is a binding site for [4Fe-4S] cluster. The (2E)-4-hydroxy-3-methylbut-2-enyl diphosphate site is built by His-63 and His-96. His-63 and His-96 together coordinate dimethylallyl diphosphate. Residues His-63 and His-96 each coordinate isopentenyl diphosphate. [4Fe-4S] cluster is bound at residue Cys-118. His-146 contacts (2E)-4-hydroxy-3-methylbut-2-enyl diphosphate. His-146 contacts dimethylallyl diphosphate. His-146 lines the isopentenyl diphosphate pocket. The active-site Proton donor is the Glu-148. A (2E)-4-hydroxy-3-methylbut-2-enyl diphosphate-binding site is contributed by Thr-186. Cys-216 contacts [4Fe-4S] cluster. The (2E)-4-hydroxy-3-methylbut-2-enyl diphosphate site is built by Ser-244, Ser-245, Asn-246, and Ser-289. 4 residues coordinate dimethylallyl diphosphate: Ser-244, Ser-245, Asn-246, and Ser-289. Positions 244, 245, 246, and 289 each coordinate isopentenyl diphosphate.

This sequence belongs to the IspH family. The cofactor is [4Fe-4S] cluster.

The enzyme catalyses isopentenyl diphosphate + 2 oxidized [2Fe-2S]-[ferredoxin] + H2O = (2E)-4-hydroxy-3-methylbut-2-enyl diphosphate + 2 reduced [2Fe-2S]-[ferredoxin] + 2 H(+). It carries out the reaction dimethylallyl diphosphate + 2 oxidized [2Fe-2S]-[ferredoxin] + H2O = (2E)-4-hydroxy-3-methylbut-2-enyl diphosphate + 2 reduced [2Fe-2S]-[ferredoxin] + 2 H(+). Its pathway is isoprenoid biosynthesis; dimethylallyl diphosphate biosynthesis; dimethylallyl diphosphate from (2E)-4-hydroxy-3-methylbutenyl diphosphate: step 1/1. It functions in the pathway isoprenoid biosynthesis; isopentenyl diphosphate biosynthesis via DXP pathway; isopentenyl diphosphate from 1-deoxy-D-xylulose 5-phosphate: step 6/6. Catalyzes the conversion of 1-hydroxy-2-methyl-2-(E)-butenyl 4-diphosphate (HMBPP) into a mixture of isopentenyl diphosphate (IPP) and dimethylallyl diphosphate (DMAPP). Acts in the terminal step of the DOXP/MEP pathway for isoprenoid precursor biosynthesis. The chain is 4-hydroxy-3-methylbut-2-enyl diphosphate reductase from Mycobacterium sp. (strain JLS).